A 2286-amino-acid polypeptide reads, in one-letter code: Non-reducing polyketide synthase fsr1 (2286 aa).

The N-terminal acylcarrier protein transacylase domain (SAT) stretch occupies residues 7–342 (LYLFGDQTFD…IYTALKKTSL (336 aa)). One can recognise a Ketosynthase family 3 (KS3) domain in the interval 368-805 (KPKLAIVAMS…GGNSALLIQD (438 aa)). Catalysis depends on for beta-ketoacyl synthase activity residues Cys540, His675, and His722. Positions 905–1195 (VFTFTGQGAQ…GMVKPTLGQQ (291 aa)) are acyl/malonyl transferases. Ser996 acts as the For acyl/malonyl transferase activity in catalysis. Residues 1285–1417 (HSVVEESGDS…CVVLFKDRSH (133 aa)) form an N-terminal hotdog fold region. Residues 1285-1591 (HSVVEESGDS…IQGVPRRVLK (307 aa)) enclose the PKS/mFAS DH domain. Residues 1296–1588 (KTGIVVEADI…QIAIQGVPRR (293 aa)) form a product template (PT) domainn region. His1317 functions as the Proton acceptor; for dehydratase activity in the catalytic mechanism. Residues 1444 to 1591 (SARFNRPMAY…IQGVPRRVLK (148 aa)) are C-terminal hotdog fold. Catalysis depends on Asp1504, which acts as the Proton donor; for dehydratase activity. The interval 1600–1639 (KKGQPQRQTQDKPRNTPSQTKDSTPKPAQNKPAAKVEPPK) is disordered. The 76-residue stretch at 1637–1712 (PPKFSTAIRI…DLRAFLGADE (76 aa)) folds into the Carrier 1 domain. Ser1671 is modified (O-(pantetheine 4'-phosphoryl)serine). Positions 1716–1735 (ESSSSAASDSGRDTTTTGSA) are disordered. The 76-residue stretch at 1748 to 1823 (EVEFERALEI…DLKTMLAREM (76 aa)) folds into the Carrier 2 domain. Ser1782 is modified (O-(pantetheine 4'-phosphoryl)serine). The interval 1897-2145 (VTGASGGLGS…NWTPVNDIAD (249 aa)) is reductase (R) domain.

Its pathway is polyketide biosynthesis. Functionally, non-reducing polyketide synthase; part of the gene cluster that mediates the biosynthesis of fusarubins, highly pigmented naphthoquinones responsible for the coloration of the fruiting bodies. The non-reducing polyketide synthase FSR1 is responsible for the condensation of seven acetyl-CoA units to yield a haptaketide. After rings A and B are formed by aldol-type cyclization, the PKS-derived product is released as 6-O-demethylfusarubinaldehyde. Then, two hydroxyl groups at C-5 and C-10 are incorporated by FSR3, and simultaneously hydroxyl groups at C-6 and C-8 are methylated by FSR2. The aldehyde is, on the one hand, reduced by FSR3 to 8-O-methylfusarubin alcohol, which equilibrates mainly with 8-O-methylfusarubin and only small amounts of 8-O-methylnectriafurone. On the other hand, the aldehyde can be oxidized to form 8-O-methylfusarubinic acid, a reaction driven by FSR3 equilibrating with 8-O-methylfusarubinlactone, finally resulting in 8-O-methylanhydrofusarubinlactol after a further reduction step and loss of water. 8-O-Methylfusarubinic acid can also undergo decarboxylation, resulting in 8-O-methyl-13-hydroxynorjavanicin after another hydroxylation step at C-13. Both steps are most likely also accomplished by FSR3. No enzymatic function has been determined so far for either FSR4 and FSR5. Their deletion does not alter the product spectrum, but the possibility that they catalyze specific enzymatic steps during perithecium development cannot be ruled out. FSR4 might possess a regulatory function in the biosynthesis of fusarubins. The chain is Non-reducing polyketide synthase fsr1 from Gibberella fujikuroi (strain CBS 195.34 / IMI 58289 / NRRL A-6831) (Bakanae and foot rot disease fungus).